A 271-amino-acid polypeptide reads, in one-letter code: MANYTAADVKRLRELTGAGMLDSKNALVEAEGDFDKAVELLRIKGAKDVGKRAERATAEGLVAAKDGALIELNSETDFVAKNGEFQALADQIVAAAAAAKAADVDALKAVKLGDTTVEQAIADLSAKIGEKLELRRATYFDGTTETYLHKRAADLPPAVGVLVEYTGGDTSAAHAVALQIAALKAKYLTREDVPADIVANERRIAEETARNEGKPEQALSKIVEGRVTGFYKDVVLLDQPAVSDNKKSVKALLDEAGVTVTRFVRFEVGQA.

The tract at residues 76–79 (TDFV) is involved in Mg(2+) ion dislocation from EF-Tu.

Belongs to the EF-Ts family.

It is found in the cytoplasm. Functionally, associates with the EF-Tu.GDP complex and induces the exchange of GDP to GTP. It remains bound to the aminoacyl-tRNA.EF-Tu.GTP complex up to the GTP hydrolysis stage on the ribosome. In Mycolicibacterium vanbaalenii (strain DSM 7251 / JCM 13017 / BCRC 16820 / KCTC 9966 / NRRL B-24157 / PYR-1) (Mycobacterium vanbaalenii), this protein is Elongation factor Ts.